Consider the following 446-residue polypeptide: Phosphoglucosamine mutase (446 aa).

Residue S99 is the Phosphoserine intermediate of the active site. The Mg(2+) site is built by S99, D242, D244, and D246. S99 carries the post-translational modification Phosphoserine.

The protein belongs to the phosphohexose mutase family. Mg(2+) is required as a cofactor. Post-translationally, activated by phosphorylation.

The enzyme catalyses alpha-D-glucosamine 1-phosphate = D-glucosamine 6-phosphate. Functionally, catalyzes the conversion of glucosamine-6-phosphate to glucosamine-1-phosphate. The chain is Phosphoglucosamine mutase from Campylobacter curvus (strain 525.92).